We begin with the raw amino-acid sequence, 317 residues long: Eukaryotic translation initiation factor 2 subunit 2 (317 aa).

Residues 1-146 (MSATEEENVL…KEKTITTSDG (146 aa)) form a disordered region. Residues 79-90 (AIEKLENEGAHD) are compositionally biased toward basic and acidic residues. The segment covering 109–125 (KSSTTTTTSTTTTTTEP) has biased composition (low complexity). A C4-type zinc finger spans residues 222 to 246 (HVYNYVFAELGTNGSIDGNQRLVIR).

The protein belongs to the eIF-2-beta/eIF-5 family. As to quaternary structure, eukaryotic translation initiation factor 2 eIF2 is a heterotrimeric complex composed of an alpha, a beta and a gamma subunit.

It is found in the cytoplasm. The protein localises to the cytosol. Its function is as follows. Component of the eIF2 complex that functions in the early steps of protein synthesis by forming a ternary complex with GTP and initiator tRNA. This complex binds to a 40S ribosomal subunit, followed by mRNA binding to form a 43S pre-initiation complex (43S PIC). Junction of the 60S ribosomal subunit to form the 80S initiation complex is preceded by hydrolysis of the GTP bound to eIF2 and release of an eIF2-GDP binary complex. In order for eIF2 to recycle and catalyze another round of initiation, the GDP bound to eIF2 must exchange with GTP by way of a reaction catalyzed by eIF2B. The polypeptide is Eukaryotic translation initiation factor 2 subunit 2 (eif2s2) (Dictyostelium discoideum (Social amoeba)).